The primary structure comprises 278 residues: Dermonecrotic toxin LhSicTox-alphaIV1ii (278 aa).

The active site involves histidine 5. The Mg(2+) site is built by glutamate 25 and aspartate 27. Histidine 41 functions as the Nucleophile in the catalytic mechanism. 2 disulfide bridges follow: cysteine 45-cysteine 51 and cysteine 47-cysteine 192. Residue aspartate 85 coordinates Mg(2+).

This sequence belongs to the arthropod phospholipase D family. Class II subfamily. Mg(2+) is required as a cofactor. In terms of tissue distribution, expressed by the venom gland.

It is found in the secreted. It carries out the reaction an N-(acyl)-sphingosylphosphocholine = an N-(acyl)-sphingosyl-1,3-cyclic phosphate + choline. It catalyses the reaction an N-(acyl)-sphingosylphosphoethanolamine = an N-(acyl)-sphingosyl-1,3-cyclic phosphate + ethanolamine. The catalysed reaction is a 1-acyl-sn-glycero-3-phosphocholine = a 1-acyl-sn-glycero-2,3-cyclic phosphate + choline. The enzyme catalyses a 1-acyl-sn-glycero-3-phosphoethanolamine = a 1-acyl-sn-glycero-2,3-cyclic phosphate + ethanolamine. In terms of biological role, dermonecrotic toxins cleave the phosphodiester linkage between the phosphate and headgroup of certain phospholipids (sphingolipid and lysolipid substrates), forming an alcohol (often choline) and a cyclic phosphate. This toxin acts on sphingomyelin (SM). It may also act on ceramide phosphoethanolamine (CPE), lysophosphatidylcholine (LPC) and lysophosphatidylethanolamine (LPE), but not on lysophosphatidylserine (LPS), and lysophosphatidylglycerol (LPG). It acts by transphosphatidylation, releasing exclusively cyclic phosphate products as second products. Induces dermonecrosis, hemolysis, increased vascular permeability, edema, inflammatory response, and platelet aggregation. The protein is Dermonecrotic toxin LhSicTox-alphaIV1ii of Loxosceles hirsuta (Recluse spider).